Here is an 833-residue protein sequence, read N- to C-terminus: Leucine--tRNA ligase (833 aa).

The 'HIGH' region motif lies at 41–52 (PYPSGAGLHVGH). Residues 610-614 (KMSKS) carry the 'KMSKS' region motif. Position 613 (K613) interacts with ATP.

This sequence belongs to the class-I aminoacyl-tRNA synthetase family.

Its subcellular location is the cytoplasm. The catalysed reaction is tRNA(Leu) + L-leucine + ATP = L-leucyl-tRNA(Leu) + AMP + diphosphate. The sequence is that of Leucine--tRNA ligase from Streptococcus pneumoniae (strain 70585).